An 881-amino-acid polypeptide reads, in one-letter code: MESADILPGSRGTVDRRCEGSEEKITPPRPVEDFNPQLFPNEVYLNFTSMHGIQPVVARIRELSRKTVSAAMVPPLEWFERLPRLETPLDIEPLHLPFSVYLISGNAGSGKSTCIQTLNETMDCVITGATRVAAQNVYTKLSSAFATRHINTIFQEFGFRGNHVQAQLGKYQYSCSSSPPPIEELQKRDIVYYWEVLVDITRRLFESTASRGEFENIRALERLLGRAPGSLTRLAFCTNGSLPAFTRTNIVIIDEAGLLGRHLLTVVVYCWWMLNAAYKSPQYAEGKVPVIVCVGSPTQTDSLESRFEHKNLKCHVRSSENVLTHIITNRTIREYVSLSTNWAIFINNKRCQEYEFGELMKVLEYGLPITEEHMRLVDTFVVPEAYINNPANLPGWTRLYSSHKEVSAYMAKLHAHLKVSGERQFVVFTLPAYTFVKTAAFDEYKKITQQPSLSLDKWLAANASRVSNYSQSRDQDAGKTQCEYYSEHGVVVARTDVTYVLNSQVSVTTRMRKFVFGFSGTFETFDAVLKDDAFIKTQGETSVEYAYRFLSTLLFSGMINFYNFLKRPGLDEGRVREAYRRMAALTAKLIPGASVLESACDNPSGAPLNFRGLTDPPGFTGGTTNDWDDDNDVVFAALNEGAIDMLYCNYEFVRPETTQEVYSQFLMLKTMFVGRYSIFMDLFGGDFESSPFDTFVDNISYKGCEIFVGSMRGGVSSIALQTDSYTLMGYTSAPVYPFVEELARRKLHEGIAELFGAMNMPRMVLRDQHGFMSVLNVNLSEFVESVDDVELDMATAVDYGLSSKLAMTIARSQGLSLDKVAICFPRNNLRINSVYVAMSRTVSSRFLRMNLNPLRERHERDTVISEHILAALRDRDVQIVY.

The tract at residues 1–32 (MESADILPGSRGTVDRRCEGSEEKITPPRPVE) is disordered. Residues 13 to 32 (TVDRRCEGSEEKITPPRPVE) are compositionally biased toward basic and acidic residues. 105 to 112 (GNAGSGKS) lines the ATP pocket.

The protein belongs to the herpesviridae helicase family. Associates with the primase and the primase-associated factor to form the helicase-primase complex.

The protein localises to the host nucleus. Functionally, component of the helicase/primase complex. Unwinds the DNA at the replication forks and generates single-stranded DNA for both leading and lagging strand synthesis. The primase synthesizes short RNA primers on the lagging strand that the polymerase elongates using dNTPs. Possesses helicase-like motifs and therefore may act as the helicase subunit of the complex. The protein is DNA replication helicase of Equus caballus (Horse).